The chain runs to 457 residues: Multidrug resistance protein MdtK (457 aa).

A run of 12 helical transmembrane segments spans residues 11 to 31 (LLAL…MGFV), 53 to 73 (IWLP…PVIA), 93 to 113 (WLAG…GYII), 127 to 147 (AVGY…FQVA), 160 to 180 (GMVM…IFIY), 188 to 208 (LGGI…FIAM), 243 to 263 (LPIA…ALLV), 276 to 296 (IALN…AAVT), 314 to 334 (AART…IFTV), 350 to 370 (VVAL…SDSI), 387 to 407 (IFFI…YILA), and 418 to 438 (PAGF…LMML).

The protein belongs to the multi antimicrobial extrusion (MATE) (TC 2.A.66.1) family. MdtK subfamily.

Its subcellular location is the cell inner membrane. Its function is as follows. Multidrug efflux pump that functions probably as a Na(+)/drug antiporter. In Salmonella agona (strain SL483), this protein is Multidrug resistance protein MdtK.